The chain runs to 240 residues: UDP-2,3-diacylglucosamine hydrolase (240 aa).

Mn(2+) is bound by residues Asp7, His9, Asp40, Asn78, and His113. A substrate-binding site is contributed by 78–79; the sequence is NR. Asp121, Ser159, Lys166, and His194 together coordinate substrate. Positions 194 and 196 each coordinate Mn(2+).

It belongs to the LpxH family. Mn(2+) is required as a cofactor.

It is found in the cell inner membrane. The enzyme catalyses UDP-2-N,3-O-bis[(3R)-3-hydroxytetradecanoyl]-alpha-D-glucosamine + H2O = 2-N,3-O-bis[(3R)-3-hydroxytetradecanoyl]-alpha-D-glucosaminyl 1-phosphate + UMP + 2 H(+). It functions in the pathway glycolipid biosynthesis; lipid IV(A) biosynthesis; lipid IV(A) from (3R)-3-hydroxytetradecanoyl-[acyl-carrier-protein] and UDP-N-acetyl-alpha-D-glucosamine: step 4/6. Its function is as follows. Hydrolyzes the pyrophosphate bond of UDP-2,3-diacylglucosamine to yield 2,3-diacylglucosamine 1-phosphate (lipid X) and UMP by catalyzing the attack of water at the alpha-P atom. Involved in the biosynthesis of lipid A, a phosphorylated glycolipid that anchors the lipopolysaccharide to the outer membrane of the cell. This is UDP-2,3-diacylglucosamine hydrolase from Pseudomonas putida (strain ATCC 700007 / DSM 6899 / JCM 31910 / BCRC 17059 / LMG 24140 / F1).